Here is a 433-residue protein sequence, read N- to C-terminus: MDSSAKTASAPDPFFAGTLAEADPEIAAAITGELGRQRHEIELIASENIVSRAVLEAQGSVMTNKYAEGYPGARYYGGCEWVDVAETLAIERAKKLFGARFANVQPNSGSQMNQAVFLALLQPGDTFMGLDLAAGGHLTHGAPVNMSGKWFKVAHYTVRRDDHLIDMDEVARRAEEVKPKLIIAGGSAYSRPWDFKRFREIADSVGAYLMVDMAHFAGLVAGGVHASPVPHAHVTTTTTHKSLRGPRGGLILCNDEALAKKFNSAIFPGLQGGPLMHVIAAKAVALGEALRPDFKIYAKNVVENARALAESLRGHGFDIVSGGTDNHLMLVDLRPKGLKGNVSEKALVRAGLTCNKNGIPFDPEKPFVTSGLRLGTPATTTRGFGVSEFKQVGGLIAEVLTAIAQAEDGKAPLVEAAVKEKVKALTDRFPIYQ.

(6S)-5,6,7,8-tetrahydrofolate-binding positions include leucine 132 and 136-138; that span reads GHL. Position 241 is an N6-(pyridoxal phosphate)lysine (lysine 241).

The protein belongs to the SHMT family. In terms of assembly, homodimer. Pyridoxal 5'-phosphate serves as cofactor.

The protein localises to the cytoplasm. The catalysed reaction is (6R)-5,10-methylene-5,6,7,8-tetrahydrofolate + glycine + H2O = (6S)-5,6,7,8-tetrahydrofolate + L-serine. It functions in the pathway one-carbon metabolism; tetrahydrofolate interconversion. It participates in amino-acid biosynthesis; glycine biosynthesis; glycine from L-serine: step 1/1. Its function is as follows. Catalyzes the reversible interconversion of serine and glycine with tetrahydrofolate (THF) serving as the one-carbon carrier. This reaction serves as the major source of one-carbon groups required for the biosynthesis of purines, thymidylate, methionine, and other important biomolecules. Also exhibits THF-independent aldolase activity toward beta-hydroxyamino acids, producing glycine and aldehydes, via a retro-aldol mechanism. In Nitrobacter winogradskyi (strain ATCC 25391 / DSM 10237 / CIP 104748 / NCIMB 11846 / Nb-255), this protein is Serine hydroxymethyltransferase.